Consider the following 146-residue polypeptide: Hemoglobin subunit beta (146 aa).

Residue Val1 is modified to N-acetylvaline. In terms of domain architecture, Globin spans 2-146 (HLTGEEKAAV…VATALAHKYH (145 aa)). At Thr12 the chain carries Phosphothreonine. Ser44 carries the post-translational modification Phosphoserine. N6-acetyllysine is present on Lys59. Position 63 (His63) interacts with heme b. Lys82 carries the post-translational modification N6-acetyllysine. His92 is a heme b binding site. Position 93 is an S-nitrosocysteine (Cys93). An N6-acetyllysine modification is found at Lys144.

It belongs to the globin family. Heterotetramer of two alpha chains and two beta chains. As to expression, red blood cells.

Its function is as follows. Involved in oxygen transport from the lung to the various peripheral tissues. This Macroderma gigas (Australian ghost bat) protein is Hemoglobin subunit beta (HBB).